The following is a 737-amino-acid chain: Zinc finger protein 184 (737 aa).

The KRAB domain maps to Val-28–Glu-99. Ser-117 bears the Phosphoserine mark. A Glycyl lysine isopeptide (Lys-Gly) (interchain with G-Cter in SUMO2) cross-link involves residue Lys-185. 17 consecutive C2H2-type zinc fingers follow at residues Cys-201–His-223, Tyr-229–His-251, Tyr-257–His-279, Tyr-285–His-307, Tyr-313–His-335, Phe-341–His-363, Tyr-369–His-391, Tyr-397–His-419, Tyr-425–His-447, Tyr-453–His-475, Phe-481–His-503, Tyr-509–His-531, Tyr-537–His-559, Tyr-565–His-587, Tyr-593–His-615, Tyr-621–His-643, and Tyr-649–His-671. The C2H2-type 18; degenerate zinc finger occupies Tyr-677 to His-698. A C2H2-type 19 zinc finger spans residues Leu-704 to His-726.

This sequence belongs to the krueppel C2H2-type zinc-finger protein family.

The protein localises to the nucleus. May be involved in transcriptional regulation. The chain is Zinc finger protein 184 (Zfp184) from Mus musculus (Mouse).